A 375-amino-acid polypeptide reads, in one-letter code: Alanine racemase (375 aa).

The active-site Proton acceptor; specific for D-alanine is lysine 38. An N6-(pyridoxal phosphate)lysine modification is found at lysine 38. Arginine 137 lines the substrate pocket. Tyrosine 266 acts as the Proton acceptor; specific for L-alanine in catalysis. Residue methionine 314 coordinates substrate.

This sequence belongs to the alanine racemase family. Requires pyridoxal 5'-phosphate as cofactor.

It catalyses the reaction L-alanine = D-alanine. The protein operates within amino-acid biosynthesis; D-alanine biosynthesis; D-alanine from L-alanine: step 1/1. Catalyzes the interconversion of L-alanine and D-alanine. May also act on other amino acids. The chain is Alanine racemase (alr) from Cutibacterium acnes (strain DSM 16379 / KPA171202) (Propionibacterium acnes).